Reading from the N-terminus, the 877-residue chain is Inner centromere protein (877 aa).

Residues 47–142 (HYSDQPELMP…SQVAAPADRS (96 aa)) are disordered. Over residues 62–71 (KNRKRRKRPS) the composition is skewed to basic residues. Over residues 98–111 (SKRDSQRLQNKEDT) the composition is skewed to basic and acidic residues. Over residues 119 to 134 (QELSSQTVSRRLTRSQ) the composition is skewed to polar residues. The tract at residues 135-270 (VAAPADRSEV…KHNERDDKEP (136 aa)) is interaction with CBX5. The PXVXL/I motif motif lies at 155–159 (PVVEI). Disordered regions lie at residues 178 to 210 (RAENHSASLPPSSDDKSPKESSAAESQPLPAAS), 248 to 459 (LGLE…ASKV), 498 to 548 (LQHD…RLRK), 572 to 695 (ALFD…KAAR), and 707 to 805 (LQKE…PAWA). The span at 261 to 271 (KHNERDDKEPS) shows a compositional bias: basic and acidic residues. The segment covering 272–283 (QRTTDSPETPTG) has biased composition (polar residues). Low complexity predominate over residues 339–351 (SVSSSSVNGSGSE). Residues 384–403 (LRSQTVNRNEQQQETSNNEC) show a composition bias toward polar residues. Basic and acidic residues-rich tracts occupy residues 500 to 548 (HDPK…RLRK), 572 to 591 (ALFDEKTEKAREERLAEEKI), 598 to 615 (KKMEEAEARRRQDEEARK), 624 to 695 (EERR…KAAR), and 707 to 742 (LQKEMEKKEKEEQLLAEMKRQEQEQKKLPEEQKAKD). Positions 503-715 (KEKERQKLQA…QLQKEMEKKE (213 aa)) are SAH. Residues 744–765 (AQTQHLENKENSPACNSYQMTP) are compositionally biased toward polar residues. The interval 781–823 (YGMDLNSDDSTDDESQPRKPIPAWASGNQLSQAVIRQYYNPPN) is IN box.

Belongs to the INCENP family. In terms of assembly, component of the chromosomal passenger complex (CPC) composed of at least BIRC5/survivin, CDCA8/borealin, INCENP and AURKB; in the complex binds directly to AURKB via the IN box, and forms a triple-helix bundle-based subcomplex with BIRC5 and CDCA8 via its N-terminus. The initially reported homodimerization is questioned as the SAH domain is shown to be monomeric. Interacts with CBX5.

It is found in the nucleus. Its subcellular location is the chromosome. The protein localises to the centromere. The protein resides in the cytoplasm. It localises to the cytoskeleton. It is found in the spindle. Its subcellular location is the midbody. The protein localises to the kinetochore. In terms of biological role, component of the chromosomal passenger complex (CPC), a complex that acts as a key regulator of mitosis. The CPC complex has essential functions at the centromere in ensuring correct chromosome alignment and segregation and is required for chromatin-induced microtubule stabilization and spindle assembly. Acts as a scaffold regulating CPC localization and activity. The C-terminus associates with AURKB, the N-terminus associated with BIRC5/survivin and CDCA8/borealin tethers the CPC to the inner centromere, and the microtubule binding activity within the central SAH domain directs AURKB toward substrates near microtubules. The flexibility of the SAH domain is proposed to allow AURKB to follow substrates on dynamic microtubules while ensuring CPC docking to static chromatin. Activates AURKB. This chain is Inner centromere protein (INCENP), found in Gallus gallus (Chicken).